A 183-amino-acid polypeptide reads, in one-letter code: ATP synthase subunit b, chloroplastic (183 aa).

A helical membrane pass occupies residues 27–49 (LATNPINLSVVLGVLIFFGKGVL).

Belongs to the ATPase B chain family. F-type ATPases have 2 components, F(1) - the catalytic core - and F(0) - the membrane proton channel. F(1) has five subunits: alpha(3), beta(3), gamma(1), delta(1), epsilon(1). F(0) has four main subunits: a(1), b(1), b'(1) and c(10-14). The alpha and beta chains form an alternating ring which encloses part of the gamma chain. F(1) is attached to F(0) by a central stalk formed by the gamma and epsilon chains, while a peripheral stalk is formed by the delta, b and b' chains.

It is found in the plastid. It localises to the chloroplast thylakoid membrane. In terms of biological role, f(1)F(0) ATP synthase produces ATP from ADP in the presence of a proton or sodium gradient. F-type ATPases consist of two structural domains, F(1) containing the extramembraneous catalytic core and F(0) containing the membrane proton channel, linked together by a central stalk and a peripheral stalk. During catalysis, ATP synthesis in the catalytic domain of F(1) is coupled via a rotary mechanism of the central stalk subunits to proton translocation. Functionally, component of the F(0) channel, it forms part of the peripheral stalk, linking F(1) to F(0). This chain is ATP synthase subunit b, chloroplastic, found in Ranunculus macranthus (Large buttercup).